A 222-amino-acid chain; its full sequence is MNLKHIKAVAFDLDGTLVDSIPDLANAANAMREHLGLPPLDPERIKSHVGDGIASLVHRAITDERHAEADGPLWERGYRFFVQRYREHLADHTTVYPGVRDGLGLLRALQLPLVMITNKSERLAVPLAEQLGLRDHFSLIVGGDTLPEKKPSALPLLHCCQVLGIQPQELAMVGDSANDVAAARAAGCAAIAVGYGYADASTLGADLTVNSIAELYDLMKNG.

Aspartate 12 serves as the catalytic Nucleophile. Residues aspartate 12, aspartate 14, and aspartate 175 each contribute to the Mg(2+) site.

This sequence belongs to the HAD-like hydrolase superfamily. CbbY/CbbZ/Gph/YieH family. Requires Mg(2+) as cofactor.

The enzyme catalyses 2-phosphoglycolate + H2O = glycolate + phosphate. The protein operates within organic acid metabolism; glycolate biosynthesis; glycolate from 2-phosphoglycolate: step 1/1. Its function is as follows. Specifically catalyzes the dephosphorylation of 2-phosphoglycolate. Is involved in the dissimilation of the intracellular 2-phosphoglycolate formed during the DNA repair of 3'-phosphoglycolate ends, a major class of DNA lesions induced by oxidative stress. This chain is Phosphoglycolate phosphatase, found in Chromobacterium violaceum (strain ATCC 12472 / DSM 30191 / JCM 1249 / CCUG 213 / NBRC 12614 / NCIMB 9131 / NCTC 9757 / MK).